A 234-amino-acid chain; its full sequence is Cell adhesion molecule CEACAM15 (234 aa).

A signal peptide spans 1 to 32; sequence MGAETMESPSLFLCKGLLLTASLLICWNWSTA. 4 N-linked (GlcNAc...) asparagine glycosylation sites follow: Asn-28, Asn-75, Asn-151, and Asn-184. The Ig-like C2-type domain maps to 146 to 226; it reads PYLQLNHTRL…NSFSSKKSYP (81 aa). An intrachain disulfide couples Cys-165 to Cys-213.

Belongs to the immunoglobulin superfamily. CEA family. As to expression, detected in placenta.

This chain is Cell adhesion molecule CEACAM15, found in Mus musculus (Mouse).